We begin with the raw amino-acid sequence, 1488 residues long: Chromosome partition protein MukB (1488 aa).

An ATP-binding site is contributed by 34–41 (GGNGAGKS). 3 coiled-coil regions span residues 326–418 (LEAD…QYNQ), 444–472 (LDTFQAKEQEATEKLLSLEQKMSVAQTAH), and 509–602 (RHLA…QRAP). Positions 666–783 (PGGAEDQRLN…SLPIFGRAAR (118 aa)) are flexible hinge. Coiled coils occupy residues 835-923 (EAEI…AKLE), 977-1116 (EMLS…AKAG), and 1209-1265 (VEAI…LQSV). A disordered region spans residues 1049–1074 (ADSGAEERARQRRDELHAQLSNNRSR). The span at 1051–1065 (SGAEERARQRRDELH) shows a compositional bias: basic and acidic residues.

The protein belongs to the SMC family. MukB subfamily. Homodimerization via its hinge domain. Binds to DNA via its C-terminal region. Interacts, and probably forms a ternary complex, with MukE and MukF via its C-terminal region. The complex formation is stimulated by calcium or magnesium. Interacts with tubulin-related protein FtsZ.

Its subcellular location is the cytoplasm. The protein localises to the nucleoid. Functionally, plays a central role in chromosome condensation, segregation and cell cycle progression. Functions as a homodimer, which is essential for chromosome partition. Involved in negative DNA supercoiling in vivo, and by this means organize and compact chromosomes. May achieve or facilitate chromosome segregation by condensation DNA from both sides of a centrally located replisome during cell division. The sequence is that of Chromosome partition protein MukB from Salmonella paratyphi A (strain ATCC 9150 / SARB42).